Consider the following 78-residue polypeptide: Acyl carrier protein (78 aa).

One can recognise a Carrier domain in the interval 2-77 (SDIEQRVKKI…QAIDYVNANL (76 aa)). Residue serine 37 is modified to O-(pantetheine 4'-phosphoryl)serine.

This sequence belongs to the acyl carrier protein (ACP) family. In terms of processing, 4'-phosphopantetheine is transferred from CoA to a specific serine of apo-ACP by AcpS. This modification is essential for activity because fatty acids are bound in thioester linkage to the sulfhydryl of the prosthetic group.

The protein resides in the cytoplasm. It functions in the pathway lipid metabolism; fatty acid biosynthesis. Carrier of the growing fatty acid chain in fatty acid biosynthesis. The protein is Acyl carrier protein of Methylobacillus flagellatus (strain ATCC 51484 / DSM 6875 / VKM B-1610 / KT).